The primary structure comprises 49 residues: Large ribosomal subunit protein bL33 (49 aa).

Belongs to the bacterial ribosomal protein bL33 family.

In Clostridium botulinum (strain ATCC 19397 / Type A), this protein is Large ribosomal subunit protein bL33.